The primary structure comprises 138 residues: Large ribosomal subunit protein uL16m (138 aa).

Belongs to the universal ribosomal protein uL16 family.

The protein resides in the mitochondrion. This chain is Large ribosomal subunit protein uL16m (RPL16), found in Chondrus crispus (Carrageen Irish moss).